Here is a 95-residue protein sequence, read N- to C-terminus: Large ribosomal subunit protein uL23 (95 aa).

It belongs to the universal ribosomal protein uL23 family. As to quaternary structure, part of the 50S ribosomal subunit. Contacts protein L29, and trigger factor when it is bound to the ribosome.

Its function is as follows. One of the early assembly proteins it binds 23S rRNA. One of the proteins that surrounds the polypeptide exit tunnel on the outside of the ribosome. Forms the main docking site for trigger factor binding to the ribosome. The chain is Large ribosomal subunit protein uL23 from Bacillus pumilus (strain SAFR-032).